We begin with the raw amino-acid sequence, 327 residues long: Glutaminase (327 aa).

6 residues coordinate substrate: Ser-92, Asn-143, Asn-195, Tyr-218, Tyr-263, and Val-281.

This sequence belongs to the glutaminase family. In terms of assembly, homotetramer.

It carries out the reaction L-glutamine + H2O = L-glutamate + NH4(+). In Synechocystis sp. (strain ATCC 27184 / PCC 6803 / Kazusa), this protein is Glutaminase.